The sequence spans 150 residues: MNDGGKRFYLVDGDILPEAILKTALVNEMLAKGEVTKVSEAVEKVGLSRSAYYKYKDGVLPFREPGRSNIVSVSLLLEHHPGILSRVLNTVAAMEGNILTINQSVPEKGLAPVAFVLDRSRMSVDLPRLLAELRQLTGVRSAQLVGSEEE.

The region spanning 72–147 (SVSLLLEHHP…GVRSAQLVGS (76 aa)) is the ACT domain.

Belongs to the UPF0735 family.

In Heliobacterium modesticaldum (strain ATCC 51547 / Ice1), this protein is UPF0735 ACT domain-containing protein Helmi_18680.